A 346-amino-acid polypeptide reads, in one-letter code: [LysW]-lysine/[LysW]-ornithine hydrolase (346 aa).

Zn(2+) is bound at residue His68. The active site involves Asp70. A Zn(2+)-binding site is contributed by Asp92. The Proton acceptor role is filled by Glu122. Residues Glu123, Glu146, and His317 each coordinate Zn(2+).

It belongs to the peptidase M20A family. LysK subfamily. The cofactor is Zn(2+). Requires Co(2+) as cofactor.

It is found in the cytoplasm. It carries out the reaction [amino-group carrier protein]-C-terminal-gamma-(L-lysyl)-L-glutamate + H2O = [amino-group carrier protein]-C-terminal-L-glutamate + L-lysine. The enzyme catalyses [amino-group carrier protein]-C-terminal-gamma-(L-ornithyl)-L-glutamate + H2O = [amino-group carrier protein]-C-terminal-L-glutamate + L-ornithine. The protein operates within amino-acid biosynthesis; L-lysine biosynthesis via AAA pathway; L-lysine from L-alpha-aminoadipate (Thermus route): step 5/5. It participates in amino-acid biosynthesis; L-arginine biosynthesis. In terms of biological role, catalyzes the release of L-lysine from [LysW]-gamma-L-lysine and the release of L-ornithine from [LysW]-L-ornithine. The polypeptide is [LysW]-lysine/[LysW]-ornithine hydrolase (Saccharolobus solfataricus (strain ATCC 35092 / DSM 1617 / JCM 11322 / P2) (Sulfolobus solfataricus)).